The following is a 377-amino-acid chain: D-alanine--D-alanine ligase (377 aa).

An ATP-grasp domain is found at 141–347 (KRILNQAGIR…YSELIDRLIQ (207 aa)). 171–226 (KEELGDLVFVKPAKQGSSVGIHKVDTEEEYETAMKDAFTYDYKVLVEAGIKNPREI) provides a ligand contact to ATP. Residues Asp-301, Glu-314, and Asn-316 each coordinate Mg(2+).

This sequence belongs to the D-alanine--D-alanine ligase family. Mg(2+) serves as cofactor. Mn(2+) is required as a cofactor.

It localises to the cytoplasm. The enzyme catalyses 2 D-alanine + ATP = D-alanyl-D-alanine + ADP + phosphate + H(+). It functions in the pathway cell wall biogenesis; peptidoglycan biosynthesis. Functionally, cell wall formation. This Limosilactobacillus fermentum (strain NBRC 3956 / LMG 18251) (Lactobacillus fermentum) protein is D-alanine--D-alanine ligase.